The following is a 406-amino-acid chain: Tyrosine--tRNA ligase (406 aa).

Tyr-35 contacts L-tyrosine. The short motif at 40-49 (ATSTSLHIGH) is the 'HIGH' region element. Residues Tyr-166 and Gln-170 each coordinate L-tyrosine. The 'KMSKS' region signature appears at 226 to 230 (KMGKS). Lys-229 is an ATP binding site. Residues 341 to 405 (ILLVDLMVSS…IGKKKILRII (65 aa)) enclose the S4 RNA-binding domain.

It belongs to the class-I aminoacyl-tRNA synthetase family. TyrS type 1 subfamily. As to quaternary structure, homodimer.

The protein localises to the cytoplasm. The enzyme catalyses tRNA(Tyr) + L-tyrosine + ATP = L-tyrosyl-tRNA(Tyr) + AMP + diphosphate + H(+). Catalyzes the attachment of tyrosine to tRNA(Tyr) in a two-step reaction: tyrosine is first activated by ATP to form Tyr-AMP and then transferred to the acceptor end of tRNA(Tyr). The chain is Tyrosine--tRNA ligase from Borrelia hermsii (strain HS1 / DAH).